Here is a 499-residue protein sequence, read N- to C-terminus: Alpha-L-arabinofuranosidase B (499 aa).

The signal sequence occupies residues 1-18; that stretch reads MFSRRNLVALGLAATVSA. N-linked (GlcNAc...) asparagine glycans are attached at residues N83 and N202.

It belongs to the glycosyl hydrolase 54 family.

The catalysed reaction is Hydrolysis of terminal non-reducing alpha-L-arabinofuranoside residues in alpha-L-arabinosides.. It participates in glycan metabolism; L-arabinan degradation. Able to hydrolyze 1,5-, 1,3- and 1,2-alpha-linkages not only in L-arabinofuranosyl oligosaccharides, but also in polysac-charides containing terminal non-reducing L-arabinofuranoses in side chains, like L-arabinan, arabinogalactan and arabinoxylan. This Aspergillus niger protein is Alpha-L-arabinofuranosidase B (abfB).